The primary structure comprises 87 residues: U3-theraphotoxin-Hhn1f (87 aa).

A signal peptide spans 1-24; the sequence is MVNMKASMFLTSAGLVLLFVVCYA. Positions 25 to 52 are excised as a propeptide; that stretch reads SESEEKEFPKEMLSSIFAVDNDFKQEER. Disulfide bonds link Cys-54-Cys-67, Cys-61-Cys-72, and Cys-66-Cys-79.

Belongs to the neurotoxin 10 (Hwtx-1) family. 51 (Hntx-8) subfamily. Hntx-8 sub-subfamily. As to expression, expressed by the venom gland.

It localises to the secreted. In terms of biological role, ion channel inhibitor. This chain is U3-theraphotoxin-Hhn1f, found in Cyriopagopus hainanus (Chinese bird spider).